A 474-amino-acid polypeptide reads, in one-letter code: Cysteine protease ATG4A (474 aa).

Residues 1 to 32 (MTSLPGRGVSPSSSDPLCEGNAAPSSSSSSGQ) form a disordered region. The Nucleophile role is filled by Cys161. Residues Asp358 and His360 contribute to the active site. Residues 439–449 (KQMYNEESSSG) show a composition bias toward polar residues. The tract at residues 439–474 (KQMYNEESSSGDGMDSINVEGLDGSGETGEEEWQIL) is disordered.

Belongs to the peptidase C54 family. In terms of assembly, interacts with ATG8.

It is found in the cytoplasm. It catalyses the reaction [protein]-C-terminal L-amino acid-glycyl-phosphatidylethanolamide + H2O = [protein]-C-terminal L-amino acid-glycine + a 1,2-diacyl-sn-glycero-3-phosphoethanolamine. In terms of biological role, cysteine protease that plays a key role in autophagy by mediating both proteolytic activation and delipidation of ATG8 family proteins. The protease activity is required for proteolytic activation of ATG8 family proteins: cleaves the C-terminal amino acid of ATG8 proteins to reveal a C-terminal glycine. Exposure of the glycine at the C-terminus is essential for ATG8 proteins conjugation to phosphatidylethanolamine (PE) and insertion to membranes, which is necessary for autophagy. In addition to the protease activity, also mediates delipidation of PE-conjugated ATG8 proteins. In Oryza sativa subsp. japonica (Rice), this protein is Cysteine protease ATG4A (ATG4A).